The following is a 142-amino-acid chain: Large ribosomal subunit protein uL13 (142 aa).

This sequence belongs to the universal ribosomal protein uL13 family. As to quaternary structure, part of the 50S ribosomal subunit.

In terms of biological role, this protein is one of the early assembly proteins of the 50S ribosomal subunit, although it is not seen to bind rRNA by itself. It is important during the early stages of 50S assembly. This Sodalis glossinidius (strain morsitans) protein is Large ribosomal subunit protein uL13.